Reading from the N-terminus, the 235-residue chain is Aspartate/glutamate leucyltransferase (235 aa).

The protein belongs to the R-transferase family. Bpt subfamily.

Its subcellular location is the cytoplasm. It catalyses the reaction N-terminal L-glutamyl-[protein] + L-leucyl-tRNA(Leu) = N-terminal L-leucyl-L-glutamyl-[protein] + tRNA(Leu) + H(+). The catalysed reaction is N-terminal L-aspartyl-[protein] + L-leucyl-tRNA(Leu) = N-terminal L-leucyl-L-aspartyl-[protein] + tRNA(Leu) + H(+). Functions in the N-end rule pathway of protein degradation where it conjugates Leu from its aminoacyl-tRNA to the N-termini of proteins containing an N-terminal aspartate or glutamate. The protein is Aspartate/glutamate leucyltransferase of Pseudomonas putida (strain GB-1).